The sequence spans 72 residues: Conotoxin VnMKLT2-0221 (72 aa).

Positions 1-22 (MKLTCVLIVAVLFLTACQLTTA) are cleaved as a signal peptide. A propeptide spanning residues 23–45 (ASYARSERQHPDLGSSDQNSKLT) is cleaved from the precursor. Residues 26–45 (ARSERQHPDLGSSDQNSKLT) form a disordered region. 3 disulfides stabilise this stretch: Cys48–Cys62, Cys55–Cys66, and Cys61–Cys71.

It belongs to the conotoxin O1 superfamily. In terms of tissue distribution, expressed by the venom duct.

The protein resides in the secreted. This chain is Conotoxin VnMKLT2-0221, found in Conus ventricosus (Mediterranean cone).